A 589-amino-acid polypeptide reads, in one-letter code: Coiled-coil domain-containing protein 22 homolog (589 aa).

2 coiled-coil regions span residues 287 to 426 (KTPL…LQTK) and 523 to 589 (CEEL…TSRQ). The tract at residues 568 to 589 (EMQNESQRLEESIRRMEVTSRQ) is disordered. Over residues 574 to 589 (QRLEESIRRMEVTSRQ) the composition is skewed to basic and acidic residues.

This sequence belongs to the CCDC22 family.

The polypeptide is Coiled-coil domain-containing protein 22 homolog (Aedes aegypti (Yellowfever mosquito)).